We begin with the raw amino-acid sequence, 288 residues long: Alpha/beta hydrolase domain-containing protein 17B (288 aa).

Catalysis depends on charge relay system residues serine 170, aspartate 235, and histidine 264. Position 282 is a phosphoserine (serine 282).

Belongs to the AB hydrolase superfamily. ABHD17 family. In terms of processing, palmitoylated on cysteine residues located in a cysteine cluster at the N-terminus which promotes membrane localization. Palmitoylation is required for post-synaptic localization and for depalmitoylating activity towards DLG4/PSD95. In terms of tissue distribution, expressed in brain.

The protein localises to the cell membrane. It is found in the recycling endosome membrane. It localises to the cell projection. Its subcellular location is the dendritic spine. The protein resides in the postsynaptic density membrane. It catalyses the reaction S-hexadecanoyl-L-cysteinyl-[protein] + H2O = L-cysteinyl-[protein] + hexadecanoate + H(+). Functionally, hydrolyzes fatty acids from S-acylated cysteine residues in proteins. Has depalmitoylating activity towards DLG4/PSD95. Has depalmitoylating activity towards GAP43. Has depalmitoylating activity towards MAP6. Has depalmitoylating activity towards NRAS. The polypeptide is Alpha/beta hydrolase domain-containing protein 17B (Mus musculus (Mouse)).